Here is a 332-residue protein sequence, read N- to C-terminus: Methionyl-tRNA formyltransferase (332 aa).

(6S)-5,6,7,8-tetrahydrofolate is bound at residue serine 124 to proline 127.

The protein belongs to the Fmt family.

The catalysed reaction is L-methionyl-tRNA(fMet) + (6R)-10-formyltetrahydrofolate = N-formyl-L-methionyl-tRNA(fMet) + (6S)-5,6,7,8-tetrahydrofolate + H(+). Attaches a formyl group to the free amino group of methionyl-tRNA(fMet). The formyl group appears to play a dual role in the initiator identity of N-formylmethionyl-tRNA by promoting its recognition by IF2 and preventing the misappropriation of this tRNA by the elongation apparatus. The chain is Methionyl-tRNA formyltransferase from Polynucleobacter necessarius subsp. necessarius (strain STIR1).